Consider the following 197-residue polypeptide: Dephospho-CoA kinase (197 aa).

One can recognise a DPCK domain in the interval 3–197 (IIGLTGGIAS…IEEIWAKRFP (195 aa)). ATP is bound at residue 11-16 (ASGKST).

Belongs to the CoaE family.

The protein resides in the cytoplasm. The enzyme catalyses 3'-dephospho-CoA + ATP = ADP + CoA + H(+). Its pathway is cofactor biosynthesis; coenzyme A biosynthesis; CoA from (R)-pantothenate: step 5/5. Its function is as follows. Catalyzes the phosphorylation of the 3'-hydroxyl group of dephosphocoenzyme A to form coenzyme A. In Geobacter sulfurreducens (strain ATCC 51573 / DSM 12127 / PCA), this protein is Dephospho-CoA kinase.